We begin with the raw amino-acid sequence, 112 residues long: uncharacterized protein (112 aa).

A compositionally biased stretch (polar residues) spans 1–11 (MAESVASSESL). The interval 1-32 (MAESVASSESLPQMKPEEPESKKSPSREAIPK) is disordered. Over residues 15 to 31 (KPEEPESKKSPSREAIP) the composition is skewed to basic and acidic residues. A helical transmembrane segment spans residues 81–101 (VVFIFMIAIMSMLVIGLVVCG).

It localises to the membrane. This is an uncharacterized protein from Encephalitozoon cuniculi (strain GB-M1) (Microsporidian parasite).